We begin with the raw amino-acid sequence, 428 residues long: Histidinol dehydrogenase (428 aa).

Tyr-124, Gln-186, and Asn-209 together coordinate NAD(+). Residues Ser-233, Gln-255, and His-258 each contribute to the substrate site. Positions 255 and 258 each coordinate Zn(2+). Active-site proton acceptor residues include Glu-322 and His-323. 4 residues coordinate substrate: His-323, Asp-356, Glu-410, and His-415. Asp-356 provides a ligand contact to Zn(2+). His-415 is a Zn(2+) binding site.

This sequence belongs to the histidinol dehydrogenase family. The cofactor is Zn(2+).

The enzyme catalyses L-histidinol + 2 NAD(+) + H2O = L-histidine + 2 NADH + 3 H(+). Its pathway is amino-acid biosynthesis; L-histidine biosynthesis; L-histidine from 5-phospho-alpha-D-ribose 1-diphosphate: step 9/9. Catalyzes the sequential NAD-dependent oxidations of L-histidinol to L-histidinaldehyde and then to L-histidine. The protein is Histidinol dehydrogenase of Bacteroides fragilis (strain ATCC 25285 / DSM 2151 / CCUG 4856 / JCM 11019 / LMG 10263 / NCTC 9343 / Onslow / VPI 2553 / EN-2).